We begin with the raw amino-acid sequence, 113 residues long: Large ribosomal subunit protein bL17 (113 aa).

The protein belongs to the bacterial ribosomal protein bL17 family. As to quaternary structure, part of the 50S ribosomal subunit. Contacts protein L32.

The polypeptide is Large ribosomal subunit protein bL17 (Clostridium tetani (strain Massachusetts / E88)).